Consider the following 530-residue polypeptide: ATP synthase subunit alpha (530 aa).

Position 169-176 (169-176 (GDRQTGKT)) interacts with ATP.

The protein belongs to the ATPase alpha/beta chains family. F-type ATPases have 2 components, CF(1) - the catalytic core - and CF(0) - the membrane proton channel. CF(1) has five subunits: alpha(3), beta(3), gamma(1), delta(1), epsilon(1). CF(0) has three main subunits: a(1), b(2) and c(9-12). The alpha and beta chains form an alternating ring which encloses part of the gamma chain. CF(1) is attached to CF(0) by a central stalk formed by the gamma and epsilon chains, while a peripheral stalk is formed by the delta and b chains.

It is found in the cell membrane. The catalysed reaction is ATP + H2O + 4 H(+)(in) = ADP + phosphate + 5 H(+)(out). Produces ATP from ADP in the presence of a proton gradient across the membrane. The alpha chain is a regulatory subunit. The polypeptide is ATP synthase subunit alpha (Mycoplasmopsis synoviae (strain 53) (Mycoplasma synoviae)).